The following is a 487-amino-acid chain: Cyclic AMP-dependent transcription factor ATF-2 (487 aa).

Residues 7-31 (FLCTAPGCGQRFTNEDHLAVHKHKH) form a C2H2-type zinc finger. At T34 the chain carries Phosphothreonine; by PKC/PRKCH. S44 carries the post-translational modification Phosphoserine. T51 bears the Phosphothreonine; by MAPK11 and MAPK14 mark. At T53 the chain carries Phosphothreonine; by MAPK1, MAPK3, MAPK11, MAPK12, MAPK14 and PLK3. A Phosphothreonine; by VRK1 modification is found at T55. 2 positions are modified to phosphoserine: S72 and S94. T98 bears the Phosphothreonine mark. A Phosphoserine; by PKC/PRKCA and PKC/PRKCB modification is found at S103. Disordered regions lie at residues 106 to 137 (EEPS…PLAQ) and 241 to 355 (PGIP…RQKR). Phosphoserine is present on S118. The segment covering 264–275 (LTQQHPPVTNGD) has biased composition (polar residues). The essential for its histone acetyltransferase activity stretch occupies residues 278 to 281 (KGHG). Over residues 300–316 (PATSTTETPASPAHTTP) the composition is skewed to low complexity. At S310 the chain carries Phosphoserine. The residue at position 322 (S322) is a Phosphoserine; by PKC/PRKCA and PKC/PRKCB. Over residues 328-345 (AANEDPDEKRRKFLERNR) the composition is skewed to basic and acidic residues. One can recognise a bZIP domain in the interval 334 to 397 (DEKRRKFLER…AQLKQLLLAH (64 aa)). Residues 336–356 (KRRKFLERNRAAASRCRQKRK) are basic motif. Position 339 is an N6-acetyllysine (K339). S349 carries the phosphoserine; by PKC/PRKCA and PKC/PRKCB modification. K356 carries the post-translational modification N6-acetyllysine. Residues 362–390 (LEKKAEDLSSLNGQLQSEVTLLRNEVAQL) form a leucine-zipper region. Positions 387-396 (VAQLKQLLLA) match the Nuclear export signal motif. Positions 407–453 (KKSGYHTADKDDSSEDLSVPSSPHTEAIQHSSVSTSNGVSSTSKAEA) are disordered. Phosphoserine is present on residues S424 and S428. The span at 425 to 436 (VPSSPHTEAIQH) shows a compositional bias: polar residues. Positions 437–449 (SSVSTSNGVSSTS) are enriched in low complexity. Phosphoserine; by ATM is present on residues S472 and S480.

It belongs to the bZIP family. ATF subfamily. Binds DNA as a dimer and can form a homodimer in the absence of DNA. Can form a heterodimer with JUN. Heterodimerization is essential for its transcriptional activity. Interacts with SMAD3 and SMAD4. Interacts with the HK1/VDAC1 complex. Interacts with NBN, MRE11, XPO1, KAT5 and CUL3. Binds through its N-terminal region to UTF1 which acts as a coactivator of ATF2 transcriptional activity. Phosphorylation of Thr-51 by MAPK14 and MAPK11, and at Thr-53 by MAPK1/ERK2, MAPK3/ERK1, MAPK11, MAPK12 and MAPK14 in response to external stimulus like insulin causes increased transcriptional activity. Phosphorylated by PLK3 following hyperosmotic stress. Also phosphorylated and activated by JNK and CaMK4. ATM-mediated phosphorylation at Ser-472 and Ser-480 stimulates its function in DNA damage response. Phosphorylation at Ser-44, Thr-55 and Ser-103 activates its transcriptional activity. Phosphorylation at Thr-51 or Thr-53 enhances acetylation of histones H2B and H4.

It is found in the nucleus. The protein localises to the cytoplasm. Its subcellular location is the mitochondrion outer membrane. In terms of biological role, transcriptional activator which regulates the transcription of various genes, including those involved in anti-apoptosis, cell growth, and DNA damage response. Dependent on its binding partner, binds to CRE (cAMP response element) consensus sequences (5'-TGACGTCA-3') or to AP-1 (activator protein 1) consensus sequences (5'-TGACTCA-3'). In the nucleus, contributes to global transcription and the DNA damage response, in addition to specific transcriptional activities that are related to cell development, proliferation and death. In the cytoplasm, interacts with and perturbs HK1- and VDAC1-containing complexes at the mitochondrial outer membrane, thereby impairing mitochondrial membrane potential, inducing mitochondrial leakage and promoting cell death. The phosphorylated form (mediated by ATM) plays a role in the DNA damage response and is involved in the ionizing radiation (IR)-induced S phase checkpoint control and in the recruitment of the MRN complex into the IR-induced foci (IRIF). Exhibits histone acetyltransferase (HAT) activity which specifically acetylates histones H2B and H4 in vitro. In concert with CUL3 and RBX1, promotes the degradation of KAT5 thereby attenuating its ability to acetylate and activate ATM. Can elicit oncogenic or tumor suppressor activities depending on the tissue or cell type. This is Cyclic AMP-dependent transcription factor ATF-2 (Atf2) from Mus musculus (Mouse).